The primary structure comprises 1124 residues: Translation initiation factor IF-2 (1124 aa).

Residues isoleucine 32–isoleucine 41 show a composition bias toward low complexity. Disordered regions lie at residues isoleucine 32–histidine 451 and leucine 480–arginine 523. Positions alanine 94–lysine 104 are enriched in polar residues. Positions valine 134–alanine 173 are enriched in low complexity. The span at glycine 192 to valine 203 shows a compositional bias: polar residues. Residues serine 214–proline 227 are compositionally biased toward low complexity. 2 stretches are compositionally biased toward basic and acidic residues: residues serine 235 to glycine 246 and proline 261 to arginine 272. Composition is skewed to low complexity over residues glycine 274–proline 283 and arginine 411–arginine 422. Basic and acidic residues predominate over residues glycine 425–arginine 439. Composition is skewed to basic residues over residues alanine 484–alanine 493 and leucine 500–arginine 514. One can recognise a tr-type G domain in the interval arginine 615 to leucine 787. A G1 region spans residues glycine 624–threonine 631. GTP is bound at residue glycine 624 to threonine 631. Residues glycine 649–histidine 653 form a G2 region. The tract at residues aspartate 674–glycine 677 is G3. Residues aspartate 674–histidine 678 and asparagine 728–aspartate 731 each bind GTP. Positions asparagine 728 to aspartate 731 are G4. Residues serine 764 to isoleucine 766 form a G5 region.

Belongs to the TRAFAC class translation factor GTPase superfamily. Classic translation factor GTPase family. IF-2 subfamily.

It is found in the cytoplasm. Its function is as follows. One of the essential components for the initiation of protein synthesis. Protects formylmethionyl-tRNA from spontaneous hydrolysis and promotes its binding to the 30S ribosomal subunits. Also involved in the hydrolysis of GTP during the formation of the 70S ribosomal complex. The sequence is that of Translation initiation factor IF-2 from Prochlorococcus marinus (strain MIT 9303).